The primary structure comprises 180 residues: Trafficking protein particle complex subunit 3 (180 aa).

Cys-68 is lipidated: S-palmitoyl cysteine.

This sequence belongs to the TRAPP small subunits family. BET3 subfamily. Homodimer. Component of the multisubunit transport protein particle (TRAPP) complex, which includes at least TRAPPC2, TRAPPC2L, TRAPPC3, TRAPPC3L, TRAPPC4, TRAPPC5, TRAPPC8, TRAPPC9, TRAPPC10, TRAPPC11 and TRAPPC12. Heterodimer with TRAPPC6A. The heterodimer TRAPPC3-TRAPPC6A interacts with TRAPPC2L. Heterodimer with TRAPPC6b. The heterodimer TRAPPC6B-TRAPPC3 interacts with TRAPPC1 likely providing a core for TRAPP complex formation. Widely expressed. Expressed in lung, heart, liver, spleen, brain and kidney.

The protein localises to the golgi apparatus. The protein resides in the cis-Golgi network. It is found in the endoplasmic reticulum. Its function is as follows. May play a role in vesicular transport from endoplasmic reticulum to Golgi. The polypeptide is Trafficking protein particle complex subunit 3 (Mus musculus (Mouse)).